The primary structure comprises 397 residues: 8-amino-7-oxononanoate synthase (397 aa).

Arginine 24 is a substrate binding site. Residue 110-111 participates in pyridoxal 5'-phosphate binding; that stretch reads GY. Histidine 135 contacts substrate. Residues serine 183, histidine 211, and threonine 240 each coordinate pyridoxal 5'-phosphate. At lysine 243 the chain carries N6-(pyridoxal phosphate)lysine. Threonine 357 is a binding site for substrate.

The protein belongs to the class-II pyridoxal-phosphate-dependent aminotransferase family. BioF subfamily. As to quaternary structure, homodimer. The cofactor is pyridoxal 5'-phosphate.

It catalyses the reaction 6-carboxyhexanoyl-[ACP] + L-alanine + H(+) = (8S)-8-amino-7-oxononanoate + holo-[ACP] + CO2. Its pathway is cofactor biosynthesis; biotin biosynthesis. Catalyzes the decarboxylative condensation of pimeloyl-[acyl-carrier protein] and L-alanine to produce 8-amino-7-oxononanoate (AON), [acyl-carrier protein], and carbon dioxide. In Hydrogenovibrio crunogenus (strain DSM 25203 / XCL-2) (Thiomicrospira crunogena), this protein is 8-amino-7-oxononanoate synthase.